Here is a 407-residue protein sequence, read N- to C-terminus: Arylacetamide deacetylase-like 4 family member 1 (407 aa).

Residues 1–4 lie on the Cytoplasmic side of the membrane; sequence MLYL. The chain crosses the membrane as a helical; Signal-anchor for type II membrane protein span at residues 5 to 25; sequence VGFLLATVCLLVLGVNVWVLI. Topologically, residues 26-407 are lumenal; it reads DHFLTIDVPP…NAVVSYIKDL (382 aa). Positions 119–121 match the Involved in the stabilization of the negatively charged intermediate by the formation of the oxyanion hole motif; it reads HGG. N-linked (GlcNAc...) asparagine glycosylation is present at Asn-168. Catalysis depends on residues Ser-193, Asp-347, and His-377.

It belongs to the 'GDXG' lipolytic enzyme family.

It is found in the membrane. This Mus musculus (Mouse) protein is Arylacetamide deacetylase-like 4 family member 1.